A 346-amino-acid polypeptide reads, in one-letter code: Very-long-chain 3-oxoacyl-CoA reductase (346 aa).

A helical membrane pass occupies residues 26-46; the sequence is SAYFLLAAGSLFVASRALTFV. NADP(+) is bound by residues valine 71, aspartate 126, aspartate 134, asparagine 153, tyrosine 220, lysine 224, isoleucine 253, and serine 255. Tyrosine 220 serves as the catalytic Proton donor. The active-site Lowers pKa of active site Tyr is lysine 224.

Belongs to the short-chain dehydrogenases/reductases (SDR) family.

The protein localises to the endoplasmic reticulum membrane. The catalysed reaction is a very-long-chain (3R)-3-hydroxyacyl-CoA + NADP(+) = a very-long-chain 3-oxoacyl-CoA + NADPH + H(+). The protein operates within lipid metabolism; fatty acid biosynthesis. Its function is as follows. Component of the microsomal membrane bound fatty acid elongation system, which produces the 26-carbon very long-chain fatty acids (VLCFA) from palmitate. Catalyzes the reduction of the 3-ketoacyl-CoA intermediate that is formed in each cycle of fatty acid elongation. VLCFAs serve as precursors for ceramide and sphingolipids. The protein is Very-long-chain 3-oxoacyl-CoA reductase of Aspergillus oryzae (strain ATCC 42149 / RIB 40) (Yellow koji mold).